The following is an 827-amino-acid chain: DNA ligase (827 aa).

NAD(+)-binding positions include 45–49 (DAAYD), 94–95 (SL), and E128. K130 serves as the catalytic N6-AMP-lysine intermediate. Residues R151, E188, K304, and K328 each coordinate NAD(+). Zn(2+) contacts are provided by C451, C454, C475, and C481. In terms of domain architecture, BRCT spans 748 to 827 (AAAAAFSGRT…AEWLAMVEAA (80 aa)).

This sequence belongs to the NAD-dependent DNA ligase family. LigA subfamily. The cofactor is Mg(2+). Mn(2+) serves as cofactor.

The enzyme catalyses NAD(+) + (deoxyribonucleotide)n-3'-hydroxyl + 5'-phospho-(deoxyribonucleotide)m = (deoxyribonucleotide)n+m + AMP + beta-nicotinamide D-nucleotide.. Its function is as follows. DNA ligase that catalyzes the formation of phosphodiester linkages between 5'-phosphoryl and 3'-hydroxyl groups in double-stranded DNA using NAD as a coenzyme and as the energy source for the reaction. It is essential for DNA replication and repair of damaged DNA. In Methylobacterium sp. (strain 4-46), this protein is DNA ligase.